A 131-amino-acid chain; its full sequence is Biogenesis of lysosome-related organelles complex 1 subunit 5 (131 aa).

This sequence belongs to the BLOC1S5 family. As to quaternary structure, component of the biogenesis of lysosome-related organelles complex-1 (BLOC-1) composed at least of blos-1, blos-2, blos-4, dsbn-1, glo-2, mutd-1 and snpn-1.

Component of the biogenesis of lysosome-related organelles complex-1 (BLOC-1) involved in gut granule biogenesis. The polypeptide is Biogenesis of lysosome-related organelles complex 1 subunit 5 (mutd-1) (Caenorhabditis elegans).